The chain runs to 628 residues: Leucine-rich repeat and fibronectin type-III domain-containing protein 3 (628 aa).

Residues 1 to 16 (MAVLPLLLCLLPLAPA) form the signal peptide. Topologically, residues 17 to 540 (SSPSQPATPS…APHAPFLGGT (524 aa)) are extracellular. One can recognise an LRRNT domain in the interval 19–59 (PSQPATPSPCPRRCRCQTQSLPLSVLCPGAGLLFVPPSLDR). 6 LRR repeats span residues 84-105 (GLLHLSLSRNTIRHVAAGAFAD), 108-129 (ALRALHLDGNRLTSLGEGQLRG), 132-153 (NLRHLILSNNQLAALAAGALDD), 157-178 (TLEDLDLSYNNLEQLPWEALGR), 181-202 (NVNTLGLDHNLLASVPAGAFSR), and 205-226 (KLARLDMTSNRLTTIPPDPLFS). In terms of domain architecture, LRRCT spans 249-295 (NPLHCNCELVWLRRLAREDDLEACASPPALGGRYFWAVGEEEFVCEP). The Ig-like domain maps to 295–382 (PPVVTHRSPP…GEATAAVELT (88 aa)). A disulfide bond links C317 and C366. 2 N-linked (GlcNAc...) asparagine glycosylation sites follow: N348 and N393. Positions 380 to 432 (ELTVGPPPPPQLANSTSCDPPRDGDPDALTPPSAASASAAAKAADTGPPTDRG) are disordered. Residues 406-429 (DALTPPSAASASAAAKAADTGPPT) show a composition bias toward low complexity. The region spanning 427 to 525 (PPTDRGVQVT…GCARFSTEPA (99 aa)) is the Fibronectin type-III domain. The chain crosses the membrane as a helical span at residues 541-561 (MIIALGGVIVASVLVFIFVLL). The Cytoplasmic portion of the chain corresponds to 562 to 628 (MRYKVHGGQP…WRPSHEPTGP (67 aa)). The tract at residues 587-628 (QTNGSLGPTPAPPAPEPAAPRAHTVVQLDCEPWRPSHEPTGP) is disordered. Positions 595–604 (TPAPPAPEPA) are enriched in pro residues. The segment covering 617-628 (EPWRPSHEPTGP) has biased composition (basic and acidic residues).

It belongs to the LRFN family. As to quaternary structure, can form heteromeric complexes with LRFN1, LRFN2, LRFN4 and LRFN5. Able to form homomeric complexes across cell junctions, between adjacent cells. Does not interact with DLG4. Post-translationally, N-glycosylated.

The protein localises to the cell membrane. Its subcellular location is the cell projection. It localises to the axon. The protein resides in the dendrite. It is found in the synapse. The protein localises to the presynaptic cell membrane. Its subcellular location is the postsynaptic cell membrane. Cell adhesion molecule that mediates homophilic cell-cell adhesion in a Ca(2+)-independent manner. Promotes neurite outgrowth in hippocampal neurons. The protein is Leucine-rich repeat and fibronectin type-III domain-containing protein 3 (LRFN3) of Ailuropoda melanoleuca (Giant panda).